The sequence spans 379 residues: Homoserine O-succinyltransferase (379 aa).

Residues 51 to 360 (NAVLICHALS…DAPQGHDAFL (310 aa)) form the AB hydrolase-1 domain. Ser-157 functions as the Nucleophile in the catalytic mechanism. A substrate-binding site is contributed by Arg-227. Residues Asp-323 and His-356 contribute to the active site. Asp-357 lines the substrate pocket.

This sequence belongs to the AB hydrolase superfamily. MetX family. As to quaternary structure, homodimer.

It is found in the cytoplasm. It carries out the reaction L-homoserine + succinyl-CoA = O-succinyl-L-homoserine + CoA. It participates in amino-acid biosynthesis; L-methionine biosynthesis via de novo pathway; O-succinyl-L-homoserine from L-homoserine: step 1/1. Its function is as follows. Transfers a succinyl group from succinyl-CoA to L-homoserine, forming succinyl-L-homoserine. The polypeptide is Homoserine O-succinyltransferase (Pseudomonas aeruginosa (strain UCBPP-PA14)).